A 175-amino-acid polypeptide reads, in one-letter code: YIELAVVADHGMFTKYNSNVNTIRTWVHEMVNSLNGFFRSMXVDDASLVNLEVWSKTLTSFGEWRDLLPRISHDHAQLLTTIVFDQQTIGIAYTAGMCDPSQSVAVVMDHVAVTMAHELGHNLGMDHDDTCTCGAKSCIMASTISKGLSFEFSDCSQNQYQTYVTKHNPQCILNK.

A Peptidase M12B domain is found at 1–175 (YIELAVVADH…KHNPQCILNK (175 aa)). Ca(2+) contacts are provided by E3 and D74. Cystine bridges form between C98–C171, C131–C155, and C133–C138. H117 is a binding site for Zn(2+). E118 is a catalytic residue. Zn(2+) is bound by residues H121 and H127. The Ca(2+) site is built by C171 and N174.

It belongs to the venom metalloproteinase (M12B) family. P-I subfamily. Monomer. The cofactor is Zn(2+). Expressed by the venom gland.

It localises to the secreted. Inhibited by EDTA, 1,10-phenanthroline and beta-mercaptoethanol. Not inhibited by the serine protease inhibitors aprotinin and benzamidin. Non-hemorrhagic snake venom zinc metalloprotease that hydrolyzes the Aalpha-chain of fibrinogen, more slowly the Bbeta-chain and shows no effect on the gamma chain. Has no coagulant activity on bovine plasma and fibrinogen. The polypeptide is Snake venom metalloproteinase BpMP-1 (Bothrops pauloensis (Neuwied's lancehead)).